The chain runs to 277 residues: Protein CIMAP1D (277 aa).

STPGR repeat units follow at residues 122 to 148 (PGPG…LGSR), 202 to 227 (PGPG…ILGR), and 238 to 263 (PGPG…MGIR). The segment at 181–277 (PSYTVVGRTP…ASTMVGDTKC (97 aa)) is disordered.

Belongs to the CIMAP family.

In Mus musculus (Mouse), this protein is Protein CIMAP1D (Cimap1d).